Reading from the N-terminus, the 353-residue chain is Peroxisome assembly protein 12-B (353 aa).

Residues 1–19 are Peroxisomal matrix-facing; it reads MAERGAHITTTSPLDDRPS. The helical transmembrane segment at 20-47 threads the bilayer; it reads IFEVVAQESLMAAARPALHHIVKVLAES. Residues 48–51 are Cytoplasmic-facing; the sequence is NPAR. Residues 52–76 traverse the membrane as a helical segment; it reads YGTLWRWFDELYTLLECLLQQHYLS. At 77–104 the chain is on the peroxisomal matrix side; it reads WASASFSENFYGLKRVTLGKQVGQRNLA. A helical membrane pass occupies residues 105–134; that stretch reads RKEYWKSLLLLVLIPYLRIKLEKLVNSLRE. At 135–139 the chain is on the cytoplasmic side; the sequence is EEDYS. The chain crosses the membrane as a helical span at residues 140-178; sequence IQNPTSFHKRCYKAILASYPFLKLGWEAWFLFYQLRYIL. At 179-243 the chain is on the peroxisomal matrix side; that stretch reads WNGKHHSPLL…LGAVTLSVSS (65 aa). Residues 244–271 form a helical membrane-spanning segment; that stretch reads SLSLGVFFLQFLDWWYSAENRETLKSLG. Over 272-353 the chain is Cytoplasmic; sequence NLPVPPPPIH…HLIKLYTPDG (82 aa). Zn(2+) is bound by residues C298, C301, C319, and C322. The RING-type; degenerate zinc finger occupies 298–337; sequence CPLCRKVRVNDTALGTSGYVFCYRCAYYYVKTHQRCPVSG.

The protein belongs to the pex2/pex10/pex12 family. In terms of assembly, component of the PEX2-PEX10-PEX12 retrotranslocation channel.

It localises to the peroxisome membrane. It functions in the pathway protein modification; protein ubiquitination. Component of a retrotranslocation channel required for peroxisome organization by mediating export of the PEX5 receptor from peroxisomes to the cytosol, thereby promoting PEX5 recycling. The retrotranslocation channel is composed of PEX2, PEX10 and PEX12; each subunit contributing transmembrane segments that coassemble into an open channel that specifically allows the passage of PEX5 through the peroxisomal membrane. PEX12 also regulates PEX5 recycling by activating the E3 ubiquitin-protein ligase activity of PEX10. When PEX5 recycling is compromised, PEX12 stimulates PEX10-mediated polyubiquitination of PEX5, leading to its subsequent degradation. This Xenopus laevis (African clawed frog) protein is Peroxisome assembly protein 12-B.